We begin with the raw amino-acid sequence, 226 residues long: Lipoprotein signal peptidase (226 aa).

Helical transmembrane passes span 12–32, 69–89, and 103–123; these read KVVA…KIWV, FLSL…AKLV, and SLII…GVIF. Catalysis depends on residues D150 and D184. A helical transmembrane segment spans residues 173 to 193; that stretch reads FVFFHPVFNFADSCISIGLIL.

Belongs to the peptidase A8 family.

Its subcellular location is the cell inner membrane. It catalyses the reaction Release of signal peptides from bacterial membrane prolipoproteins. Hydrolyzes -Xaa-Yaa-Zaa-|-(S,diacylglyceryl)Cys-, in which Xaa is hydrophobic (preferably Leu), and Yaa (Ala or Ser) and Zaa (Gly or Ala) have small, neutral side chains.. It participates in protein modification; lipoprotein biosynthesis (signal peptide cleavage). Functionally, this protein specifically catalyzes the removal of signal peptides from prolipoproteins. This chain is Lipoprotein signal peptidase, found in Porphyromonas gingivalis (strain ATCC 33277 / DSM 20709 / CIP 103683 / JCM 12257 / NCTC 11834 / 2561).